We begin with the raw amino-acid sequence, 227 residues long: PKHD-type hydroxylase Bphyt_7102 (227 aa).

Residues 80-179 form the Fe2OG dioxygenase domain; sequence QVYPPLFNRY…RIASFFWVQS (100 aa). 3 residues coordinate Fe cation: His98, Asp100, and His160. Arg170 contacts 2-oxoglutarate.

It depends on Fe(2+) as a cofactor. L-ascorbate serves as cofactor.

The sequence is that of PKHD-type hydroxylase Bphyt_7102 from Paraburkholderia phytofirmans (strain DSM 17436 / LMG 22146 / PsJN) (Burkholderia phytofirmans).